A 1152-amino-acid chain; its full sequence is Integrin alpha-M (1152 aa).

Positions 1–16 (MALRVLLLTALTLCHG) are cleaved as a signal peptide. The Extracellular portion of the chain corresponds to 17-1104 (FNLDTENAMT…TKVEPFEVPN (1088 aa)). FG-GAP repeat units follow at residues 18–75 (NLDT…SCEP) and 76–135 (IRLQ…QQPQ). Cys-66 and Cys-73 are oxidised to a cystine. Asn-86 carries N-linked (GlcNAc...) asparagine glycosylation. Cys-105 and Cys-123 form a disulfide bridge. One can recognise a VWFA domain in the interval 150–328 (DIAFLIDGSG…EALKTIQNQL (179 aa)). An N-linked (GlcNAc...) asparagine glycan is attached at Asn-240. FG-GAP repeat units follow at residues 339–390 (QTGS…STFI), 391–442 (NMTR…TGMW), 443–503 (ESNA…RARW), 506–564 (DAVL…SGIS), and 569–629 (QRIA…FNPR). N-linked (GlcNAc...) asparagine glycosylation occurs at Asn-391. Positions 465, 467, 469, 473, 529, 531, 533, 537, 592, 596, and 600 each coordinate Ca(2+). Residue Asn-469 is glycosylated (N-linked (GlcNAc...) asparagine). A disulfide bridge connects residues Cys-654 and Cys-711. 3 N-linked (GlcNAc...) asparagine glycosylation sites follow: Asn-692, Asn-696, and Asn-734. Residues Cys-770 and Cys-776 are joined by a disulfide bond. Asn-801 carries an N-linked (GlcNAc...) asparagine glycan. The cysteines at positions 847 and 864 are disulfide-linked. Residues Asn-880, Asn-900, Asn-911, Asn-940, Asn-946, Asn-978, Asn-993, and Asn-1021 are each glycosylated (N-linked (GlcNAc...) asparagine). 2 disulfides stabilise this stretch: Cys-998/Cys-1022 and Cys-1027/Cys-1032. 3 N-linked (GlcNAc...) asparagine glycosylation sites follow: Asn-1044, Asn-1050, and Asn-1075. The helical transmembrane segment at 1105–1128 (PLPLIVGSSVGGLLLLALITAALY) threads the bilayer. The Cytoplasmic segment spans residues 1129–1152 (KLGFFKRQYKDMMSEGGPPGAEPQ). The GFFKR motif signature appears at 1131-1135 (GFFKR).

Belongs to the integrin alpha chain family. As to quaternary structure, heterodimer of an alpha and a beta subunit. ITGAM associates with ITGB2. Found in a complex with CD177 and ITGB2/CD18. Interacts with JAM3. Interacts with THBD. Interacts with complement factor H/CFH; this interaction mediates adhesion of neutrophils to pathogens leading to pathogen clearance. Interacts with TMEM268; this interaction inhibits ITGAM degradation via the endosome-lysosome pathway. As to expression, predominantly expressed in monocytes and granulocytes. Expressed in neutrophils (at protein level).

Its subcellular location is the cell membrane. The protein resides in the membrane raft. In terms of biological role, integrin ITGAM/ITGB2 is implicated in various adhesive interactions of monocytes, macrophages and granulocytes as well as in mediating the uptake of complement-coated particles and pathogens. It is identical with CR-3, the receptor for the iC3b fragment of the third complement component. It probably recognizes the R-G-D peptide in C3b. Integrin ITGAM/ITGB2 is also a receptor for fibrinogen, factor X and ICAM1. It recognizes P1 and P2 peptides of fibrinogen gamma chain. Regulates neutrophil migration. In association with beta subunit ITGB2/CD18, required for CD177-PRTN3-mediated activation of TNF primed neutrophils. May regulate phagocytosis-induced apoptosis in extravasated neutrophils. May play a role in mast cell development. Required with TYROBP/DAP12 in microglia to control production of microglial superoxide ions which promote the neuronal apoptosis that occurs during brain development. This Homo sapiens (Human) protein is Integrin alpha-M (ITGAM).